Reading from the N-terminus, the 949-residue chain is Copper-transporting ATPase PAA1, chloroplastic (949 aa).

A chloroplast-targeting transit peptide spans 1–103 (MESTLSAFST…SSSPSFRSIS (103 aa)). Positions 113-126 (YNGGSGGGGGGGSE) are enriched in gly residues. The segment at 113 to 142 (YNGGSGGGGGGGSESGDSKSKLGANASDGV) is disordered. Residues 148–222 (DIIILDVGGM…HLTNCGFQST (75 aa)) form the HMA domain. Positions 159 and 162 each coordinate Cu(+). The next 6 helical transmembrane spans lie at 253–274 (LAVSWALCAVCLVGHLTHFLGV), 287–306 (FHVSLCLITLLGPGRKLVLD), 314–334 (GSPNMNTLVGLGALSSFSVSS), 349–369 (EEPVMLIAFVLLGRNLEQRAK), 502–524 (VAGRFTYGVMALSAATFTFWNLF), and 543–560 (LQLSCSVLVVACPCALGL). Aspartate 598 serves as the catalytic 4-aspartylphosphate intermediate. Residue 807 to 814 (GDGINDAA) participates in ATP binding. Mg(2+) contacts are provided by aspartate 808 and aspartate 812. Helical transmembrane passes span 863–882 (KQNLWWAFGYNIVGIPIAAG) and 895–913 (SMAGALMGVSSLGVMTNSL). The disordered stretch occupies residues 925–949 (DKNVKPEPKEGTKQPHENTRWKQSS).

Belongs to the cation transport ATPase (P-type) (TC 3.A.3) family. Type IB subfamily. Expressed in the shoots and roots.

The protein resides in the plastid. Its subcellular location is the chloroplast membrane. The enzyme catalyses Cu(+)(in) + ATP + H2O = Cu(+)(out) + ADP + phosphate + H(+). Functionally, mediates copper transfer across the plastid envelope. Required for the delivery of copper into the plastid stroma, which is essential for the function of copper proteins. Seems to be selective for monovalent copper Cu(+) transport. Also plays a role in glucose signaling-mediated cell proliferation of root meristem in non-green tissues. The sequence is that of Copper-transporting ATPase PAA1, chloroplastic (PAA1) from Arabidopsis thaliana (Mouse-ear cress).